The sequence spans 356 residues: Protein ATP1B4 (356 aa).

The Nuclear segment spans residues 1–109; it reads MRRQLRSRRA…SLARTGQSRS (109 aa). Residues 26–78 are disordered; sequence EANHNYLADEEEEAEEEAQVMMVPGLEEEEEEEEGKEEEEEREEEEGQGQSTG. Composition is skewed to acidic residues over residues 33–43 and 51–72; these read ADEEEEAEEEA and LEEE…EEEG. The helical; Signal-anchor for type II membrane protein transmembrane segment at 110–130 threads the bilayer; that stretch reads LILVIYFFFYASLAAVITLFI. Topologically, residues 131–356 are perinuclear space; sequence YMLFLAISPY…RIIFTLNIET (226 aa).

The protein belongs to the X(+)/potassium ATPases subunit beta family. In terms of assembly, associates with a SMAD7-transcriptional complex. Interacts with TOR1AIP1. Does not associate with known Na,K-ATPase alpha-subunits. Interacts with SNW1. Expressed in skeletal muscle (at protein level). Expressed during postnatal development in skeletal muscle and heart.

Its subcellular location is the nucleus inner membrane. Its function is as follows. May act as a transcriptional coregulator during muscle development through its interaction with SNW1. Has lost its ancestral function as a Na,K-ATPase beta-subunit. This is Protein ATP1B4 (Atp1b4) from Mus musculus (Mouse).